Here is a 508-residue protein sequence, read N- to C-terminus: ATP synthase subunit alpha (508 aa).

169–176 (GDRGTGKS) lines the ATP pocket.

It belongs to the ATPase alpha/beta chains family. F-type ATPases have 2 components, CF(1) - the catalytic core - and CF(0) - the membrane proton channel. CF(1) has five subunits: alpha(3), beta(3), gamma(1), delta(1), epsilon(1). CF(0) has three main subunits: a(1), b(2) and c(9-12). The alpha and beta chains form an alternating ring which encloses part of the gamma chain. CF(1) is attached to CF(0) by a central stalk formed by the gamma and epsilon chains, while a peripheral stalk is formed by the delta and b chains.

It localises to the cell membrane. It carries out the reaction ATP + H2O + 4 H(+)(in) = ADP + phosphate + 5 H(+)(out). In terms of biological role, produces ATP from ADP in the presence of a proton gradient across the membrane. The alpha chain is a regulatory subunit. In Natranaerobius thermophilus (strain ATCC BAA-1301 / DSM 18059 / JW/NM-WN-LF), this protein is ATP synthase subunit alpha.